Reading from the N-terminus, the 79-residue chain is Probable [Fe-S]-dependent transcriptional repressor (79 aa).

Residues Cys54, Cys59, Cys62, and Cys68 each contribute to the iron-sulfur cluster site.

Belongs to the FeoC family.

May function as a transcriptional regulator that controls feoABC expression. The sequence is that of Probable [Fe-S]-dependent transcriptional repressor from Photorhabdus laumondii subsp. laumondii (strain DSM 15139 / CIP 105565 / TT01) (Photorhabdus luminescens subsp. laumondii).